The sequence spans 475 residues: Ribulose bisphosphate carboxylase large chain (475 aa).

Residues 1-2 constitute a propeptide that is removed on maturation; the sequence is MS. At P3 the chain carries N-acetylproline. Position 14 is an N6,N6,N6-trimethyllysine (K14). The substrate site is built by N123 and T173. K175 (proton acceptor) is an active-site residue. Residue K177 coordinates substrate. Mg(2+)-binding residues include K201, D203, and E204. The residue at position 201 (K201) is an N6-carboxylysine. The active-site Proton acceptor is H294. Residues R295, H327, and S379 each contribute to the substrate site.

The protein belongs to the RuBisCO large chain family. Type I subfamily. Heterohexadecamer of 8 large chains and 8 small chains; disulfide-linked. The disulfide link is formed within the large subunit homodimers. Mg(2+) is required as a cofactor. The disulfide bond which can form in the large chain dimeric partners within the hexadecamer appears to be associated with oxidative stress and protein turnover.

It is found in the plastid. Its subcellular location is the chloroplast. It catalyses the reaction 2 (2R)-3-phosphoglycerate + 2 H(+) = D-ribulose 1,5-bisphosphate + CO2 + H2O. It carries out the reaction D-ribulose 1,5-bisphosphate + O2 = 2-phosphoglycolate + (2R)-3-phosphoglycerate + 2 H(+). Its function is as follows. RuBisCO catalyzes two reactions: the carboxylation of D-ribulose 1,5-bisphosphate, the primary event in carbon dioxide fixation, as well as the oxidative fragmentation of the pentose substrate in the photorespiration process. Both reactions occur simultaneously and in competition at the same active site. The sequence is that of Ribulose bisphosphate carboxylase large chain from Anthoceros angustus (Hornwort).